Reading from the N-terminus, the 150-residue chain is Large ribosomal subunit protein bL9 (150 aa).

It belongs to the bacterial ribosomal protein bL9 family.

In terms of biological role, binds to the 23S rRNA. This Desulforudis audaxviator (strain MP104C) protein is Large ribosomal subunit protein bL9.